Here is an 86-residue protein sequence, read N- to C-terminus: Large ribosomal subunit protein bL27 (86 aa).

A disordered region spans residues 1–26; the sequence is MATKKAGGSSRNGRDSAGRRLGVKKS.

Belongs to the bacterial ribosomal protein bL27 family.

The sequence is that of Large ribosomal subunit protein bL27 from Rickettsia akari (strain Hartford).